We begin with the raw amino-acid sequence, 883 residues long: Valine--tRNA ligase (883 aa).

The short motif at 46-56 is the 'HIGH' region element; the sequence is PNVTGKLHLGH. The short motif at 520–524 is the 'KMSKS' region element; it reads KMSKS. Lysine 523 is an ATP binding site. A coiled-coil region spans residues 809–883; it reads LADLLNVEEE…RIKEMEKLIK (75 aa).

The protein belongs to the class-I aminoacyl-tRNA synthetase family. ValS type 1 subfamily. In terms of assembly, monomer.

The protein resides in the cytoplasm. It catalyses the reaction tRNA(Val) + L-valine + ATP = L-valyl-tRNA(Val) + AMP + diphosphate. Its function is as follows. Catalyzes the attachment of valine to tRNA(Val). As ValRS can inadvertently accommodate and process structurally similar amino acids such as threonine, to avoid such errors, it has a 'posttransfer' editing activity that hydrolyzes mischarged Thr-tRNA(Val) in a tRNA-dependent manner. This chain is Valine--tRNA ligase, found in Streptococcus mutans serotype c (strain ATCC 700610 / UA159).